Reading from the N-terminus, the 422-residue chain is MAAAAVVEFQRAQSLISTDRNASIDIFHSIVRRDVQEDDEEAVRVKEQSILELGSLLAKTGQAAELGGLLKFVRPFLISISKAKAARLVRSLLDLFLDMEAATGQEVELCLECIEWAKAEKRTFLRQALEARLISLYFDTKRYQEALQLESQLLQELKKMDDKALLVEVQLLESKTYHALSNLPKARAALTSARTTANAIYCPPKLQAALDMQSGIIHAAEEKDWKTAYSYFFEAFEGYDSIDSPRAVTALKYMLLCKIMLSLPEEVQALISGKLGLRYAGRQTDALKCIAQASKNRSLADFEKALTEYTKELRDDPIINTHLAKLYDNLLEQNLIRVIEPFSRVQITHIAGLIKLSKNDVERKLSQMILDKKFHGILDQGEDVLIIFEEPPVDKTYEAALETIQNMSKVVDSLYNKAKKLT.

The PCI domain maps to 228-392 (AYSYFFEAFE…DVLIIFEEPP (165 aa)).

It belongs to the proteasome subunit S9 family. In terms of assembly, component of the lid subcomplex of the 19S proteasome regulatory particle complex (also named PA700 complex). The 26S proteasome consists of a 20S proteasome core and two 19S regulatory subunits.

It is found in the nucleus. The protein localises to the cytoplasm. Its subcellular location is the cytosol. Functionally, component of the lid subcomplex of the 26S proteasome, a multiprotein complex involved in the ATP-dependent degradation of ubiquitinated proteins. In the complex, psmd11b is required for proteasome assembly. This chain is 26S proteasome non-ATPase regulatory subunit 11B (psmd11b), found in Danio rerio (Zebrafish).